The sequence spans 379 residues: Cobalt-precorrin-5B C(1)-methyltransferase (379 aa).

Belongs to the CbiD family.

The catalysed reaction is Co-precorrin-5B + S-adenosyl-L-methionine = Co-precorrin-6A + S-adenosyl-L-homocysteine. It functions in the pathway cofactor biosynthesis; adenosylcobalamin biosynthesis; cob(II)yrinate a,c-diamide from sirohydrochlorin (anaerobic route): step 6/10. In terms of biological role, catalyzes the methylation of C-1 in cobalt-precorrin-5B to form cobalt-precorrin-6A. The polypeptide is Cobalt-precorrin-5B C(1)-methyltransferase (Salmonella dublin (strain CT_02021853)).